We begin with the raw amino-acid sequence, 393 residues long: Formate-dependent phosphoribosylglycinamide formyltransferase (393 aa).

N(1)-(5-phospho-beta-D-ribosyl)glycinamide is bound by residues 22 to 23 and Glu82; that span reads EL. ATP is bound by residues Arg114, Lys155, 160–165, 195–198, and Glu203; these read SSGKGQ and EGFI. Residues 119–308 enclose the ATP-grasp domain; that stretch reads RLAAEELGLP…EFALHARAIL (190 aa). Residues Glu267 and Glu279 each coordinate Mg(2+). Residues Asp286, Lys356, and 363–364 each bind N(1)-(5-phospho-beta-D-ribosyl)glycinamide; that span reads RR.

The protein belongs to the PurK/PurT family. In terms of assembly, homodimer.

It carries out the reaction N(1)-(5-phospho-beta-D-ribosyl)glycinamide + formate + ATP = N(2)-formyl-N(1)-(5-phospho-beta-D-ribosyl)glycinamide + ADP + phosphate + H(+). It functions in the pathway purine metabolism; IMP biosynthesis via de novo pathway; N(2)-formyl-N(1)-(5-phospho-D-ribosyl)glycinamide from N(1)-(5-phospho-D-ribosyl)glycinamide (formate route): step 1/1. Functionally, involved in the de novo purine biosynthesis. Catalyzes the transfer of formate to 5-phospho-ribosyl-glycinamide (GAR), producing 5-phospho-ribosyl-N-formylglycinamide (FGAR). Formate is provided by PurU via hydrolysis of 10-formyl-tetrahydrofolate. This chain is Formate-dependent phosphoribosylglycinamide formyltransferase, found in Pseudomonas aeruginosa (strain LESB58).